Reading from the N-terminus, the 473-residue chain is Siroheme synthase (473 aa).

The segment at 1-206 (MDYLPIFMKI…GNTGEAEALL (206 aa)) is precorrin-2 dehydrogenase /sirohydrochlorin ferrochelatase. NAD(+) contacts are provided by residues 22–23 (TV) and 43–44 (PK). Positions 223-473 (GEVYIIGAGP…KSLLDDRVPA (251 aa)) are uroporphyrinogen-III C-methyltransferase. Residue P232 participates in S-adenosyl-L-methionine binding. D255 serves as the catalytic Proton acceptor. Residue K277 is the Proton donor of the active site. S-adenosyl-L-methionine-binding positions include 308–310 (GGD), I313, 338–339 (TA), M390, and G419.

The protein in the N-terminal section; belongs to the precorrin-2 dehydrogenase / sirohydrochlorin ferrochelatase family. It in the C-terminal section; belongs to the precorrin methyltransferase family.

The enzyme catalyses uroporphyrinogen III + 2 S-adenosyl-L-methionine = precorrin-2 + 2 S-adenosyl-L-homocysteine + H(+). It catalyses the reaction precorrin-2 + NAD(+) = sirohydrochlorin + NADH + 2 H(+). It carries out the reaction siroheme + 2 H(+) = sirohydrochlorin + Fe(2+). It participates in cofactor biosynthesis; adenosylcobalamin biosynthesis; precorrin-2 from uroporphyrinogen III: step 1/1. It functions in the pathway cofactor biosynthesis; adenosylcobalamin biosynthesis; sirohydrochlorin from precorrin-2: step 1/1. Its pathway is porphyrin-containing compound metabolism; siroheme biosynthesis; precorrin-2 from uroporphyrinogen III: step 1/1. The protein operates within porphyrin-containing compound metabolism; siroheme biosynthesis; siroheme from sirohydrochlorin: step 1/1. It participates in porphyrin-containing compound metabolism; siroheme biosynthesis; sirohydrochlorin from precorrin-2: step 1/1. In terms of biological role, multifunctional enzyme that catalyzes the SAM-dependent methylations of uroporphyrinogen III at position C-2 and C-7 to form precorrin-2 via precorrin-1. Then it catalyzes the NAD-dependent ring dehydrogenation of precorrin-2 to yield sirohydrochlorin. Finally, it catalyzes the ferrochelation of sirohydrochlorin to yield siroheme. The protein is Siroheme synthase of Hydrogenovibrio crunogenus (strain DSM 25203 / XCL-2) (Thiomicrospira crunogena).